The chain runs to 137 residues: Nucleoside diphosphate kinase (137 aa).

Residues lysine 9, phenylalanine 57, arginine 85, threonine 91, arginine 102, and asparagine 112 each coordinate ATP. The active-site Pros-phosphohistidine intermediate is the histidine 115.

It belongs to the NDK family. Homotetramer. Requires Mg(2+) as cofactor.

It localises to the cytoplasm. It catalyses the reaction a 2'-deoxyribonucleoside 5'-diphosphate + ATP = a 2'-deoxyribonucleoside 5'-triphosphate + ADP. The catalysed reaction is a ribonucleoside 5'-diphosphate + ATP = a ribonucleoside 5'-triphosphate + ADP. In terms of biological role, major role in the synthesis of nucleoside triphosphates other than ATP. The ATP gamma phosphate is transferred to the NDP beta phosphate via a ping-pong mechanism, using a phosphorylated active-site intermediate. The protein is Nucleoside diphosphate kinase of Nitratiruptor sp. (strain SB155-2).